An 833-amino-acid chain; its full sequence is Major vault protein (833 aa).

7 MVP repeats span residues 54-118 (RHYC…QLIP), 119-170 (PNTG…TVIY), 171-223 (PNTA…TMLS), 224-278 (DLKA…VSLS), 280-328 (KEYV…LVVG), 329-380 (KEEA…MALD), and 381-433 (KNEG…SIQT).

As to quaternary structure, the vault ribonucleoprotein particle is a huge (400 A x 670 A) cage structure of 12.9 MDa. It consists of a dimer of half-vaults, with each half-vault comprising 39 identical major vault protein (MVP) chains, PARP4 and one or more vault RNAs (vRNAs).

It is found in the cytoplasm. Its subcellular location is the nucleus. In terms of biological role, required for normal vault structure. Vaults are multi-subunit structures that may act as scaffolds for proteins involved in signal transduction. Vaults may also play a role in nucleo-cytoplasmic transport. The chain is Major vault protein from Leishmania infantum.